The chain runs to 293 residues: Deubiquitinase OTUD6B (293 aa).

Position 1 is an N-acetylmethionine (methionine 1). The region spanning 147 to 284 (LEIKQIPSDG…GEHYNSVTRL (138 aa)) is the OTU domain. A cys-loop region spans residues 152–158 (IPSDGHC). The active site involves aspartate 155. Cysteine 158 acts as the Nucleophile in catalysis. Positions 219–229 (IVNTAAWGGQL) are variable-loop. The his-loop stretch occupies residues 267–277 (YMRHAYGLGEH). Residue histidine 277 is part of the active site.

In terms of assembly, interacts with the eukaryotic translation initiation factor 4F complex.

The catalysed reaction is Thiol-dependent hydrolysis of ester, thioester, amide, peptide and isopeptide bonds formed by the C-terminal Gly of ubiquitin (a 76-residue protein attached to proteins as an intracellular targeting signal).. Deubiquitinating enzyme that may play a role in the ubiquitin-dependent regulation of protein synthesis, downstream of mTORC1. May associate with the protein synthesis initiation complex and modify its ubiquitination to repress translation. May also repress DNA synthesis and modify different cellular targets thereby regulating cell growth and proliferation. May also play a role in proteasome assembly and function. Functionally, stimulates protein synthesis. Influences the expression of CCND1/cyclin D1 by promoting its translation and regulates MYC/c-Myc protein stability. The sequence is that of Deubiquitinase OTUD6B from Homo sapiens (Human).